A 58-amino-acid chain; its full sequence is MFTVFLLVVLATTVVSFTSDRASDGRKDAASGLIALTMKGCCSYPPCFATNPDCGRRR.

The signal sequence occupies residues 1 to 16; sequence MFTVFLLVVLATTVVS. The propeptide occupies 17–39; sequence FTSDRASDGRKDAASGLIALTMK. Intrachain disulfides connect cysteine 41–cysteine 47 and cysteine 42–cysteine 54. Cysteine 54 carries the post-translational modification Cysteine amide.

As to expression, expressed by the venom duct.

Its subcellular location is the secreted. Its function is as follows. Alpha-conotoxins act on postsynaptic membranes, they bind to the nicotinic acetylcholine receptors (nAChR) and thus inhibit them. This toxin blocks mammalian nAChR alpha-3-beta-4/CHRNA3-CHRNB4 subunits. Also exhibits inhibition of D.melanogaster alpha-7/CHRNA7 nAChRs. This is Alpha-conotoxin AuIB from Conus aulicus (Princely cone).